Reading from the N-terminus, the 633-residue chain is Basic helix-loop-helix ARNT-like protein 1 (633 aa).

Positions 1–65 (MADQRMDISS…GMDTDKDDQH (65 aa)) are disordered. Phosphoserine; by GSK3-beta is present on serine 17. Positions 24–33 (ISSSLSTSGV) are enriched in polar residues. The Nuclear localization signal motif lies at 36–41 (NRKRKG). The bHLH domain maps to 79 to 132 (NAREAHSQIEKRRRDKMNSFIDELASLVPTCNAMSRKLDKLTVLRMAVQHMKTL). A Phosphoserine modification is found at serine 85. Serine 97 bears the Phosphoserine; by CK2 mark. The short motif at 149-159 (LSDDELKHLIL) is the Nuclear export signal 1 element. The PAS 1 domain maps to 150–222 (SDDELKHLIL…EQLSSSDTAP (73 aa)). A Glycyl lysine isopeptide (Lys-Gly) (interchain with G-Cter in SUMO2 and SUMO3) cross-link involves residue lysine 259. Residue lysine 266 forms a Glycyl lysine isopeptide (Lys-Gly) (interchain with G-Cter in SUMO) linkage. The PAS 2 domain maps to 333–403 (PQPVNGEIRV…ECHRQVLQTR (71 aa)). The Nuclear export signal 2 motif lies at 368-376 (LAYLPQELL). Positions 408-451 (TNCYKFKIKDGSFITLRSRWFSFMNPWTKEVEYIVSTNTVVSTS) constitute a PAC domain. 2 disordered regions span residues 469 to 499 (SMDS…RAGA) and 518 to 578 (GSSP…DNSS). Positions 518–528 (GSSPSSCGSSP) are enriched in low complexity. Lysine 545 is subject to N6-acetyllysine. Positions 563–578 (GQIQDSSGYPYSDNSS) are enriched in polar residues.

As to quaternary structure, component of the circadian clock oscillator which includes the CRY1/2 proteins, CLOCK or NPAS2, BMAL1 or BMAL2, CSNK1D and/or CSNK1E, TIMELESS and the PER1/2/3 proteins. Forms a heterodimer with CLOCK. The CLOCK-BMAL1 heterodimer is required for E-box-dependent transactivation, for CLOCK nuclear translocation and degradation, and, for phosphorylation of both CLOCK and BMAL1. Interacts with PER1, PER2, CRY1 and CRY2 and this interaction requires a translocation to the nucleus. Interaction of the CLOCK-BMAL1 heterodimer with PER or CRY inhibits transcription activation. Interacts with NPAS2. Ubiquitinated, leading to its proteasomal degradation. Deubiquitinated by USP9X. Post-translationally, O-glycosylated; contains O-GlcNAc. O-glycosylation by OGT prevents protein degradation by inhibiting ubiquitination. It also stabilizes the CLOCK-BMAL1 heterodimer thereby increasing CLOCK-BMAL1-mediated transcription of genes in the negative loop of the circadian clock such as PER1/2/3 and CRY1/2. In terms of processing, acetylated on Lys-545 by CLOCK during the repression phase of the circadian cycle. Acetylation facilitates recruitment of CRY1 protein and initiates the repression phase of the circadian cycle. Acetylated at Lys-545 by KAT5 during the activation phase of the cycle, leading to recruitment of the positive transcription elongation factor b (P-TEFb) and BRD4, followed by productive elongation of circadian transcripts. Deacetylated by SIRT1, which may result in decreased protein stability. Phosphorylated upon dimerization with CLOCK. Phosphorylation enhances the transcriptional activity, alters the subcellular localization and decreases the stability of the CLOCK-BMAL1 heterodimer by promoting its degradation. Phosphorylation shows circadian variations in the liver with a peak between CT10 to CT14. Phosphorylation at Ser-97 by CK2 is essential for its nuclear localization, its interaction with CLOCK and controls CLOCK nuclear entry. Dephosphorylation at Ser-85 is important for dimerization with CLOCK and transcriptional activity. Post-translationally, sumoylated on Lys-266 upon dimerization with CLOCK. Predominantly conjugated to poly-SUMO2/3 rather than SUMO1 and the level of these conjugates undergo rhythmic variation, peaking at CT9-CT12. Sumoylation localizes it exclusively to the PML body and promotes its ubiquitination in the PML body, ubiquitin-dependent proteasomal degradation and the transcriptional activity of the CLOCK-BMAL1 heterodimer. In terms of processing, undergoes lysosome-mediated degradation in a time-dependent manner in the liver. In terms of tissue distribution, expressed in pineal gland and retina.

It is found in the nucleus. The protein localises to the cytoplasm. The protein resides in the PML body. Functionally, transcriptional activator which forms a core component of the circadian clock. The circadian clock, an internal time-keeping system, regulates various physiological processes through the generation of approximately 24 hour circadian rhythms in gene expression, which are translated into rhythms in metabolism and behavior. It is derived from the Latin roots 'circa' (about) and 'diem' (day) and acts as an important regulator of a wide array of physiological functions including metabolism, sleep, body temperature, blood pressure, endocrine, immune, cardiovascular, and renal function. Consists of two major components: the central clock, residing in the suprachiasmatic nucleus (SCN) of the brain, and the peripheral clocks that are present in nearly every tissue and organ system. Both the central and peripheral clocks can be reset by environmental cues, also known as Zeitgebers (German for 'timegivers'). The predominant Zeitgeber for the central clock is light, which is sensed by retina and signals directly to the SCN. The central clock entrains the peripheral clocks through neuronal and hormonal signals, body temperature and feeding-related cues, aligning all clocks with the external light/dark cycle. Circadian rhythms allow an organism to achieve temporal homeostasis with its environment at the molecular level by regulating gene expression to create a peak of protein expression once every 24 hours to control when a particular physiological process is most active with respect to the solar day. Transcription and translation of core clock components (CLOCK, NPAS2, BMAL1, BMAL2, PER1, PER2, PER3, CRY1 and CRY2) plays a critical role in rhythm generation, whereas delays imposed by post-translational modifications (PTMs) are important for determining the period (tau) of the rhythms (tau refers to the period of a rhythm and is the length, in time, of one complete cycle). A diurnal rhythm is synchronized with the day/night cycle, while the ultradian and infradian rhythms have a period shorter and longer than 24 hours, respectively. Disruptions in the circadian rhythms contribute to the pathology of cardiovascular diseases, cancer, metabolic syndromes and aging. A transcription/translation feedback loop (TTFL) forms the core of the molecular circadian clock mechanism. Transcription factors, CLOCK or NPAS2 and BMAL1 or BMAL2, form the positive limb of the feedback loop, act in the form of a heterodimer and activate the transcription of core clock genes and clock-controlled genes (involved in key metabolic processes), harboring E-box elements (5'-CACGTG-3') within their promoters. The core clock genes: PER1/2/3 and CRY1/2 which are transcriptional repressors form the negative limb of the feedback loop and interact with the CLOCK|NPAS2-BMAL1|BMAL2 heterodimer inhibiting its activity and thereby negatively regulating their own expression. This heterodimer also activates nuclear receptors NR1D1/2 and RORA/B/G, which form a second feedback loop and which activate and repress BMAL1 transcription, respectively. The preferred binding motif for the CLOCK-BMAL1 heterodimer is 5'-CACGTGA-3', which contains a flanking adenine nucleotide at the 3-prime end of the canonical 6-nucleotide E-box sequence. CLOCK specifically binds to the half-site 5'-CAC-3', while BMAL1 binds to the half-site 5'-GTGA-3'. Essential for the rhythmic interaction of CLOCK with ASS1 and plays a critical role in positively regulating CLOCK-mediated acetylation of ASS1. Plays a role in protecting against lethal sepsis by limiting the expression of immune checkpoint protein CD274 in macrophages in a PKM2-dependent manner. The protein is Basic helix-loop-helix ARNT-like protein 1 (BMAL1) of Gallus gallus (Chicken).